Consider the following 367-residue polypeptide: Forkhead box protein I1-B (367 aa).

Disordered stretches follow at residues 1–21 and 213–274; these read MNPV…HLPH and DNGN…PPTV. Positions 128 to 222 form a DNA-binding region, fork-head; that stretch reads RPPYSYSALI…DNGNFRRKRK (95 aa). Basic and acidic residues predominate over residues 233–246; the sequence is AKRDEDHLNPKGKE. Polar residues predominate over residues 252 to 274; the sequence is TPSSSPEVLSPTGHSKSPSPPTV.

Initially localized to the animal hemisphere (the presumptive ectoderm) of early-mid blastula embryos. Becomes restricted to head placodes, excluding the otic placodes, by the tailbud stages.

It localises to the nucleus. In terms of biological role, transcription factor. Essential for ventral specification of the early cephalic (head) ectoderm during gastrulation, playing a role in the 'non-neural' versus 'neural' cell fate choice. Binds to DNA via the target sequence 5'-[AG]TAAA[CT]A-3', with 5'-ATAAACA-3' being the preferred binding site. The sequence is that of Forkhead box protein I1-B (foxi1-b) from Xenopus laevis (African clawed frog).